Here is a 1113-residue protein sequence, read N- to C-terminus: Nucleoporin NUP116/NSP116 (1113 aa).

Residues 1–35 (MFGVSRGAFPSATTQPFGSTGSTFGGQQQQQQPVA) are disordered. 4 FG repeats span residues 2–3 (FG), 17–18 (FG), 24–25 (FG), and 40–41 (FG). The span at 13–33 (TTQPFGSTGSTFGGQQQQQQP) shows a compositional bias: low complexity. The disordered stretch occupies residues 49–91 (TQAPAFGNFGNQTSNSPFGMSGSTTANGTPFGQSQLTNNNASG). A GLFG 1; approximate repeat occupies 55–58 (GNFG). FG repeat units lie at residues 66–67 (FG), 79–80 (FG), and 94–95 (FG). The interaction with AFG2 stretch occupies residues 92-172 (SIFGGMGNNT…AGRKFGTSQN (81 aa)). The interval 110–166 (VVPNSTAGTSIKPFTTFEEKDPTTGVINVFQSITCMPEYRNFSFEELRFQDYQAGRK) is GLE2 binding sequence (GLEBS). Positions 160–362 (DYQAGRKFGT…AKPASGGLFG (203 aa)) are interaction with MEX67, not KAP95. FG repeat units lie at residues 167 to 168 (FG) and 189 to 190 (FG). The GLFG 2 repeat unit spans residues 205 to 208 (GLFG). The GLFG 3; approximate repeat unit spans residues 214-217 (GMFG). The GLFG 4; approximate repeat unit spans residues 224-227 (GGFG). The stretch at 235 to 238 (GLFG) is one GLFG 5 repeat. The FG 10 repeat unit spans residues 249–250 (FG). 3 GLFG repeats span residues 259–262 (GLFG), 276–279 (GLFG), and 288–291 (GLFG). The span at 265–279 (TNNPTNGTNNTGLFG) shows a compositional bias: low complexity. Positions 265–341 (TNNPTNGTNN…SNANANGGAF (77 aa)) are disordered. The span at 280-304 (QQNSNTNGGLFGQQQNSFGANNVSN) shows a compositional bias: polar residues. The stretch at 297 to 298 (FG) is one FG 11 repeat. The stretch at 306–309 (GAFG) is one GLFG 9; approximate repeat. The stretch at 327–330 (GIFG) is one GLFG 10; approximate repeat. Low complexity predominate over residues 330-341 (GQSNANANGGAF). The GLFG 11; approximate repeat unit spans residues 339 to 342 (GAFG). The stretch at 351–352 (FG) is one FG 12 repeat. One copy of the GLFG 12 repeat lies at 359–362 (GLFG). A sufficient for interaction with MEX67 and KAP95 region spans residues 362–535 (GQSAGSKAFG…GAKPTGFGNT (174 aa)). One copy of the FG 13 repeat lies at 370-371 (FG). Residues 371-606 (GMNTNPTGTT…NPASTSGGLF (236 aa)) form a disordered region. 4 GLFG repeats span residues 382–385 (GLFG), 395–398 (GLFG), 407–410 (GLFG), and 420–423 (GLFG). Low complexity predominate over residues 410–438 (GQNNQSQNQSGLFGQQNSSNAFGQPQQQG). The stretch at 431–432 (FG) is one FG 14 repeat. 2 GLFG repeats span residues 439–442 (GLFG) and 448–451 (GLFG). Residues 451-464 (GQQQGASTFASGNA) are compositionally biased toward polar residues. 2 stretches are compositionally biased toward low complexity: residues 465–478 (QNNS…QQQQ) and 485–522 (GQQN…QQNN). The stretch at 470 to 471 (FG) is one FG 15 repeat. 2 GLFG repeats span residues 482–485 (GLFG) and 497–500 (GLFG). FG repeat units lie at residues 510 to 511 (FG), 525 to 526 (FG), and 532 to 533 (FG). The segment covering 532–569 (FGNTSLFSNSTTNQSNGISGNNLQQQSGGLFQNKQQPA) has biased composition (polar residues). Residues 536 to 732 (SLFSNSTTNQ…QSQNALQQQQ (197 aa)) form an interaction with KAP95, not MEX67 region. GLFG repeat units lie at residues 572 to 575 (GLFG), 585 to 588 (GLFG), and 604 to 607 (GLFG). A compositionally biased stretch (polar residues) spans 588-603 (GNNQVANQNNPASTSG). Residues 616–617 (FG) form an FG 19 repeat. A GLFG 24; approximate repeat occupies 630 to 633 (GIFG). GLFG repeat units follow at residues 648–651 (GLFG), 665–668 (GLFG), and 683–686 (GLFG). Over residues 678 to 691 (SNGSTGLFGSNNTS) the composition is skewed to low complexity. Disordered stretches follow at residues 678–736 (SNGS…QQQR) and 868–939 (SEEK…ENVA). Residues 692 to 708 (QSTNAGGLFQNNTSTNT) show a composition bias toward polar residues. The segment covering 719-736 (QSMAQSQNALQQQQQQQR) has biased composition (low complexity). Phosphoserine is present on S886. Residues 916–939 (NDGEDSATKHHSRNMDEENKENVA) are compositionally biased toward basic and acidic residues. The 143-residue stretch at 967–1109 (NENYYISPSL…GTYVFIVNHA (143 aa)) folds into the Peptidase S59 domain. Residues 967 to 1113 (NENYYISPSL…FIVNHAAEQT (147 aa)) form an interaction with NUP82 NPC subcomplex region. Residues 969-1108 (NYYISPSLDT…SGTYVFIVNH (140 aa)) are nucleoporin RNA-binding motif (NRM).

Belongs to the nucleoporin GLFG family. In terms of assembly, component of the nuclear pore complex (NPC). NPC constitutes the exclusive means of nucleocytoplasmic transport. NPCs allow the passive diffusion of ions and small molecules and the active, nuclear transport receptor-mediated bidirectional transport of macromolecules such as proteins, RNAs, ribonucleoparticles (RNPs), and ribosomal subunits across the nuclear envelope. Due to its 8-fold rotational symmetry, all subunits are present with 8 copies or multiples thereof. NUP116 interacts with the NUP82 subcomplex and GLE2. Through its FG repeats it interacts with numerous karyopherins including KAP95, PSE1 (GSP1-GDP dependent), MEX67, and to homomeric RNA. Interacts with CEX1. Interacts (via N-terminus) with AFG2 (via N-terminus).

Its subcellular location is the nucleus. The protein localises to the nuclear pore complex. The protein resides in the nucleus membrane. In terms of biological role, functions as a component of the nuclear pore complex (NPC). NPC components, collectively referred to as nucleoporins (NUPs), can play the role of both NPC structural components and of docking or interaction partners for transiently associated nuclear transport factors. Active directional transport is assured by both, a Phe-Gly (FG) repeat affinity gradient for these transport factors across the NPC and a transport cofactor concentration gradient across the nuclear envelope (GSP1 and GSP2 GTPases associated predominantly with GTP in the nucleus, with GDP in the cytoplasm). Plays an important role in several nuclear export and import pathways including poly(A)+ RNA, tRNA, pre-ribosome, and protein transport. By binding ATPase AFG2, promotes AFG2-mediated release of shuttling protein RLP24 from pre-60S ribosomal particles. The sequence is that of Nucleoporin NUP116/NSP116 (NUP116) from Saccharomyces cerevisiae (strain ATCC 204508 / S288c) (Baker's yeast).